The sequence spans 66 residues: Cytochrome c oxidase subunit 26, mitochondrial (66 aa).

The N-terminal 8 residues, methionine 1–arginine 8, are a transit peptide targeting the mitochondrion. The Mitochondrial matrix segment spans residues serine 9–serine 27. The helical transmembrane segment at tryptophan 28–arginine 64 threads the bilayer. The Mitochondrial intermembrane portion of the chain corresponds to lysine 65 to alanine 66.

It belongs to the fungal cytochrome c oxidase subunit 26 family. As to quaternary structure, component of the cytochrome c oxidase (complex IV, CIV), a multisubunit enzyme composed of 12 subunits. The complex is composed of a catalytic core of 3 subunits COX1, COX2 and COX3, encoded in the mitochondrial DNA, and 9 supernumerary subunits COX4, COX5A (or COX5B), COX6, COX7, COX8, COX9, COX12, COX13 and COX26, which are encoded in the nuclear genome. The complex exists as a monomer or a dimer and forms supercomplexes (SCs) in the inner mitochondrial membrane with a dimer of ubiquinol-cytochrome c oxidoreductase (cytochrome b-c1 complex, complex III, CIII), resulting in 2 different assemblies (supercomplexes III(2)IV and III(2)IV(2)).

It is found in the mitochondrion inner membrane. Functionally, component of the cytochrome c oxidase, the last enzyme in the mitochondrial electron transport chain which drives oxidative phosphorylation. The respiratory chain contains 3 multisubunit complexes succinate dehydrogenase (complex II, CII), ubiquinol-cytochrome c oxidoreductase (cytochrome b-c1 complex, complex III, CIII) and cytochrome c oxidase (complex IV, CIV), that cooperate to transfer electrons derived from NADH and succinate to molecular oxygen, creating an electrochemical gradient over the inner membrane that drives transmembrane transport and the ATP synthase. Cytochrome c oxidase is the component of the respiratory chain that catalyzes the reduction of oxygen to water. Electrons originating from reduced cytochrome c in the intermembrane space (IMS) are transferred via the dinuclear copper A center (CU(A)) of COX2 and heme A of COX1 to the active site in COX1, a binuclear center (BNC) formed by heme A3 and copper B (CU(B)). The BNC reduces molecular oxygen to 2 water molecules using 4 electrons from cytochrome c in the IMS and 4 protons from the mitochondrial matrix. The polypeptide is Cytochrome c oxidase subunit 26, mitochondrial (COX26) (Saccharomyces cerevisiae (strain ATCC 204508 / S288c) (Baker's yeast)).